Reading from the N-terminus, the 458-residue chain is UDP-N-acetylmuramate--L-alanine ligase (458 aa).

Residue 112 to 118 (GTHGKTT) coordinates ATP.

It belongs to the MurCDEF family.

The protein resides in the cytoplasm. It carries out the reaction UDP-N-acetyl-alpha-D-muramate + L-alanine + ATP = UDP-N-acetyl-alpha-D-muramoyl-L-alanine + ADP + phosphate + H(+). The protein operates within cell wall biogenesis; peptidoglycan biosynthesis. In terms of biological role, cell wall formation. The sequence is that of UDP-N-acetylmuramate--L-alanine ligase from Geotalea uraniireducens (strain Rf4) (Geobacter uraniireducens).